The following is a 95-amino-acid chain: Costars family protein At4g33640 (95 aa).

At methionine 1 the chain carries N-acetylmethionine.

It belongs to the costars family.

This is Costars family protein At4g33640 from Arabidopsis thaliana (Mouse-ear cress).